The chain runs to 383 residues: La protein homolog (383 aa).

The segment at 1–43 (MTEVEAKATATEETTKEEEEAPETTAEQTEESAQETSENVSKL) is disordered. The segment covering 15–33 (TKEEEEAPETTAEQTEESA) has biased composition (acidic residues). Positions 37 to 129 (SENVSKLEAS…RRHPERPLPE (93 aa)) constitute an HTH La-type RNA-binding domain. Residues 141 to 228 (RTVYVKGFAP…RKMQDDYFEE (88 aa)) form the RRM domain. A xRRM domain is found at 249 to 368 (HLPKGASVHL…RTPEGRQASR (120 aa)). Residues 343–383 (KDQQARRQASNARNKGRTPEGRQASRPPQEWRRKAKGGRGE) are disordered.

The protein localises to the nucleus. Its subcellular location is the cytoplasm. May be involved in transcription termination by RNA polymerase III. Binds RNA and DNA. Binds to the 3' end of the minus strand of Sindbis virus RNA. This may be significant for Sindbis virus RNA replication. In Aedes albopictus (Asian tiger mosquito), this protein is La protein homolog.